The primary structure comprises 201 residues: 3-isopropylmalate dehydratase small subunit (201 aa).

Belongs to the LeuD family. LeuD type 1 subfamily. In terms of assembly, heterodimer of LeuC and LeuD.

The enzyme catalyses (2R,3S)-3-isopropylmalate = (2S)-2-isopropylmalate. It functions in the pathway amino-acid biosynthesis; L-leucine biosynthesis; L-leucine from 3-methyl-2-oxobutanoate: step 2/4. Functionally, catalyzes the isomerization between 2-isopropylmalate and 3-isopropylmalate, via the formation of 2-isopropylmaleate. In Escherichia coli O127:H6 (strain E2348/69 / EPEC), this protein is 3-isopropylmalate dehydratase small subunit.